Here is a 91-residue protein sequence, read N- to C-terminus: MANHETHSVIAGGIESDLHIDSSKYPHPFCSLLQKRAHFDSFKHLIFIRGLLVIAHGKRKNKISASMVSFYVSLVQVMCAHYIPDTNKVNL.

The chain is Putative defective replication initiation protein (repA1) from Escherichia coli (strain K12).